The chain runs to 206 residues: Small ribosomal subunit protein uS4 (206 aa).

Positions 96–157 (RRLDNVVYRM…KAKKQVRIQD (62 aa)) constitute an S4 RNA-binding domain.

It belongs to the universal ribosomal protein uS4 family. Part of the 30S ribosomal subunit. Contacts protein S5. The interaction surface between S4 and S5 is involved in control of translational fidelity.

Functionally, one of the primary rRNA binding proteins, it binds directly to 16S rRNA where it nucleates assembly of the body of the 30S subunit. Its function is as follows. With S5 and S12 plays an important role in translational accuracy. In Thioalkalivibrio sulfidiphilus (strain HL-EbGR7), this protein is Small ribosomal subunit protein uS4.